Reading from the N-terminus, the 279-residue chain is Release factor glutamine methyltransferase (279 aa).

D139 and N182 together coordinate S-adenosyl-L-methionine. N182–Y185 is a binding site for substrate.

It belongs to the protein N5-glutamine methyltransferase family. PrmC subfamily.

It carries out the reaction L-glutaminyl-[peptide chain release factor] + S-adenosyl-L-methionine = N(5)-methyl-L-glutaminyl-[peptide chain release factor] + S-adenosyl-L-homocysteine + H(+). In terms of biological role, methylates the class 1 translation termination release factors RF1/PrfA and RF2/PrfB on the glutamine residue of the universally conserved GGQ motif. The polypeptide is Release factor glutamine methyltransferase (Thermodesulfovibrio yellowstonii (strain ATCC 51303 / DSM 11347 / YP87)).